Here is a 1859-residue protein sequence, read N- to C-terminus: Y' element ATP-dependent helicase protein 1 copy 6 (1859 aa).

The Helicase ATP-binding domain occupies 861–1038; that stretch reads EIYMADTPSV…LQRIGLTGLA (178 aa). 874–881 is an ATP binding site; the sequence is APPGYGKT. Residues 1095 to 1244 form the Helicase C-terminal domain; sequence KLLLALFEIE…EFYGLESKKG (150 aa). Over residues 1318–1461 the composition is skewed to low complexity; it reads ANASTNATTN…ATTTESTNAS (144 aa). The segment at 1318–1485 is disordered; that stretch reads ANASTNATTN…RFHPVTDINK (168 aa). A compositionally biased stretch (basic and acidic residues) spans 1462–1485; sequence AKEDANKDGNAEDNRFHPVTDINK.

This sequence belongs to the helicase family. Yeast subtelomeric Y' repeat subfamily.

Functionally, catalyzes DNA unwinding and is involved in telomerase-independent telomere maintenance. This is Y' element ATP-dependent helicase protein 1 copy 6 (YRF1-6) from Saccharomyces cerevisiae (strain ATCC 204508 / S288c) (Baker's yeast).